A 197-amino-acid chain; its full sequence is 3-isopropylmalate dehydratase small subunit (197 aa).

Belongs to the LeuD family. LeuD type 1 subfamily. In terms of assembly, heterodimer of LeuC and LeuD.

It catalyses the reaction (2R,3S)-3-isopropylmalate = (2S)-2-isopropylmalate. The protein operates within amino-acid biosynthesis; L-leucine biosynthesis; L-leucine from 3-methyl-2-oxobutanoate: step 2/4. Its function is as follows. Catalyzes the isomerization between 2-isopropylmalate and 3-isopropylmalate, via the formation of 2-isopropylmaleate. This Corynebacterium glutamicum (strain R) protein is 3-isopropylmalate dehydratase small subunit.